The following is a 617-amino-acid chain: Dihydroxy-acid dehydratase (617 aa).

Asp81 is a Mg(2+) binding site. Cys122 contributes to the [2Fe-2S] cluster binding site. Mg(2+) contacts are provided by Asp123 and Lys124. Lys124 carries the post-translational modification N6-carboxylysine. A [2Fe-2S] cluster-binding site is contributed by Cys195. Glu492 contacts Mg(2+). Ser518 acts as the Proton acceptor in catalysis.

Belongs to the IlvD/Edd family. Homodimer. [2Fe-2S] cluster is required as a cofactor. It depends on Mg(2+) as a cofactor.

The enzyme catalyses (2R)-2,3-dihydroxy-3-methylbutanoate = 3-methyl-2-oxobutanoate + H2O. It catalyses the reaction (2R,3R)-2,3-dihydroxy-3-methylpentanoate = (S)-3-methyl-2-oxopentanoate + H2O. Its pathway is amino-acid biosynthesis; L-isoleucine biosynthesis; L-isoleucine from 2-oxobutanoate: step 3/4. It functions in the pathway amino-acid biosynthesis; L-valine biosynthesis; L-valine from pyruvate: step 3/4. Functionally, functions in the biosynthesis of branched-chain amino acids. Catalyzes the dehydration of (2R,3R)-2,3-dihydroxy-3-methylpentanoate (2,3-dihydroxy-3-methylvalerate) into 2-oxo-3-methylpentanoate (2-oxo-3-methylvalerate) and of (2R)-2,3-dihydroxy-3-methylbutanoate (2,3-dihydroxyisovalerate) into 2-oxo-3-methylbutanoate (2-oxoisovalerate), the penultimate precursor to L-isoleucine and L-valine, respectively. The chain is Dihydroxy-acid dehydratase from Xanthobacter autotrophicus (strain ATCC BAA-1158 / Py2).